The chain runs to 81 residues: Putative membrane protein insertion efficiency factor (81 aa).

The protein belongs to the UPF0161 family.

The protein resides in the cell inner membrane. In terms of biological role, could be involved in insertion of integral membrane proteins into the membrane. This Thermosipho melanesiensis (strain DSM 12029 / CIP 104789 / BI429) protein is Putative membrane protein insertion efficiency factor.